A 262-amino-acid chain; its full sequence is Tryptophan synthase alpha chain (262 aa).

Residues E48 and D59 each act as proton acceptor in the active site.

Belongs to the TrpA family. Tetramer of two alpha and two beta chains.

The catalysed reaction is (1S,2R)-1-C-(indol-3-yl)glycerol 3-phosphate + L-serine = D-glyceraldehyde 3-phosphate + L-tryptophan + H2O. The protein operates within amino-acid biosynthesis; L-tryptophan biosynthesis; L-tryptophan from chorismate: step 5/5. The alpha subunit is responsible for the aldol cleavage of indoleglycerol phosphate to indole and glyceraldehyde 3-phosphate. This is Tryptophan synthase alpha chain from Helicobacter pylori (strain G27).